Reading from the N-terminus, the 154-residue chain is Protein X (154 aa).

The mitochondrial targeting sequence stretch occupies residues 68-117 (PCALRFTSARRMETTVNAHQVLPKVLHKRTLGLSAMSTTDLEAYFKDCLF).

It belongs to the orthohepadnavirus protein X family. As to quaternary structure, may form homodimer. May interact with host CEBPA, CFLAR, CREB1, DDB1, E4F1, HBXIP, HSPD1/HSP60, NFKBIA, POLR2E and SMAD4. Interacts with host SMC5-SMC6 complex and induces its degradation. Interacts with host TRPC4AP; leading to prevent ubiquitination of TRPC4AP. Interacts with host PLSCR1; this interaction promotes ubiquitination and degradation of HBx and impairs HBx-mediated cell proliferation. Post-translationally, a fraction may be phosphorylated in insect cells and HepG2 cells, a human hepatoblastoma cell line. Phosphorylated in vitro by host protein kinase C or mitogen-activated protein kinase. N-acetylated in insect cells.

It is found in the host cytoplasm. The protein resides in the host nucleus. It localises to the host mitochondrion. In terms of biological role, multifunctional protein that plays a role in silencing host antiviral defenses and promoting viral transcription. Does not seem to be essential for HBV infection. May be directly involved in development of cirrhosis and liver cancer (hepatocellular carcinoma). Most of cytosolic activities involve modulation of cytosolic calcium. The effect on apoptosis is controversial depending on the cell types in which the studies have been conducted. May induce apoptosis by localizing in mitochondria and causing loss of mitochondrial membrane potential. May also modulate apoptosis by binding host CFLAR, a key regulator of the death-inducing signaling complex (DISC). Promotes viral transcription by using the host E3 ubiquitin ligase DDB1 to target the SMC5-SMC6 complex to proteasomal degradation. This host complex would otherwise bind to viral episomal DNA, and prevents its transcription. Moderately stimulates transcription of many different viral and cellular transcription elements. Promoters and enhancers stimulated by HBx contain DNA binding sites for NF-kappa-B, AP-1, AP-2, c-EBP, ATF/CREB, or the calcium-activated factor NF-AT. This Hepatitis B virus genotype C subtype adr (strain Japan/adr4/1983) (HBV-C) protein is Protein X.